An 82-amino-acid polypeptide reads, in one-letter code: uncharacterized protein (82 aa).

This is an uncharacterized protein from Lactococcus lactis subsp. lactis (Streptococcus lactis).